The chain runs to 477 residues: Glutamyl-tRNA(Gln) amidotransferase subunit A (477 aa).

Residues Lys76 and Ser151 each act as charge relay system in the active site. The active-site Acyl-ester intermediate is the Ser175.

The protein belongs to the amidase family. GatA subfamily. Heterotrimer of A, B and C subunits.

The enzyme catalyses L-glutamyl-tRNA(Gln) + L-glutamine + ATP + H2O = L-glutaminyl-tRNA(Gln) + L-glutamate + ADP + phosphate + H(+). Functionally, allows the formation of correctly charged Gln-tRNA(Gln) through the transamidation of misacylated Glu-tRNA(Gln) in organisms which lack glutaminyl-tRNA synthetase. The reaction takes place in the presence of glutamine and ATP through an activated gamma-phospho-Glu-tRNA(Gln). The polypeptide is Glutamyl-tRNA(Gln) amidotransferase subunit A (Prosthecochloris aestuarii (strain DSM 271 / SK 413)).